A 627-amino-acid chain; its full sequence is tRNA uridine 5-carboxymethylaminomethyl modification enzyme MnmG (627 aa).

FAD-binding positions include G13 to G18, V125, and S180. G274–F288 contacts NAD(+). Residue Q371 coordinates FAD.

It belongs to the MnmG family. As to quaternary structure, homodimer. Heterotetramer of two MnmE and two MnmG subunits. Requires FAD as cofactor.

It localises to the cytoplasm. Functionally, NAD-binding protein involved in the addition of a carboxymethylaminomethyl (cmnm) group at the wobble position (U34) of certain tRNAs, forming tRNA-cmnm(5)s(2)U34. The sequence is that of tRNA uridine 5-carboxymethylaminomethyl modification enzyme MnmG from Francisella tularensis subsp. tularensis (strain WY96-3418).